Here is a 309-residue protein sequence, read N- to C-terminus: Protein FdhE (309 aa).

The protein belongs to the FdhE family.

It localises to the cytoplasm. In terms of biological role, necessary for formate dehydrogenase activity. This Shigella boydii serotype 18 (strain CDC 3083-94 / BS512) protein is Protein FdhE.